The primary structure comprises 534 residues: Importin subunit alpha-1b (534 aa).

Positions 1-58 (MSLRPSERAEVRRSRYKVAVDADEGRRRREDNMVEIRKSRREESLLKKRRDGLPAAAA) constitute an IBB domain. ARM repeat units follow at residues 111-151 (SPPI…NIAS), 154-193 (SDNTKVVVESGAVPIFVKLLSSPSEDVREQAVWALGNVAG), 196-236 (PKCR…NFCR), 238-277 (KPQPNFEQVKPALSALQRLIHSQDEEVLTDACWALSYLSD), 280-319 (NDKIQAVIESGVFPRLVELLMHPSASVLIPALRTVGNIVT), 322-362 (DMQT…NITA), 365-404 (REQIQAVINANIIAPLVHLLQTAEFDIKKEAAWAISNATS), and 408-447 (HDQIKYLVAQGCIKPLCDLLVCPDPRIVTVCLEGLENILK). A disordered region spans residues 505–534 (DAMPSGDNAQNGFNFGNQQPNVPSGGFNFG). Positions 514–523 (QNGFNFGNQQ) are enriched in low complexity.

The protein belongs to the importin alpha family. As to quaternary structure, forms a complex with importin subunit beta-1. The whole complex, most stable and composed of importin alpha and importin beta, is referred to as PTAC or pore targeting complex. Highly expressed in root and weakly in callus, etiolated leaf and green leaf.

It localises to the cytoplasm. The protein localises to the perinuclear region. Functionally, functions in nuclear protein import. Binds specifically and directly to substrates containing either a simple or bipartite NLS motif. Promotes docking of import substrates to the nuclear envelope. In conjunction with importin beta-1, mediates the nuclear envelope docking, and the subsequent translocation into the nucleus of the constitutive morphogenetic 1 (COP1) protein containing bipartite NLS motif. This Oryza sativa subsp. japonica (Rice) protein is Importin subunit alpha-1b.